A 201-amino-acid chain; its full sequence is MCCLTPVLALALVLGAPWQALHGAPLAELSGDHDFQLFLHKNLEFTRKIRGDVAALQRAVCDTFQLCTEEELQLVQPDPHLVQAPLDQCHKRGFQAEVCFTQIRAGLHAYHDSLGAVLRLLPNHTTLVETLQLDAANLSSNIQQQMEDLGLDTVTLPAEQRSPPPTFSGPFQQQVGGFFILANFQRFLETAYRALRHLARL.

The signal sequence occupies residues 1–23; the sequence is MCCLTPVLALALVLGAPWQALHG. 2 disulfide bridges follow: cysteine 61–cysteine 67 and cysteine 89–cysteine 99. N-linked (GlcNAc...) asparagine glycosylation is found at asparagine 123 and asparagine 137.

The protein belongs to the IL-6 superfamily.

The protein resides in the secreted. Its function is as follows. Hematopoietic growth factor that stimulates the proliferation and colony formation of normal and transformed avian cells of the myeloid lineage. This is Myelomonocytic growth factor from Gallus gallus (Chicken).